The following is a 307-amino-acid chain: S-methyl-5'-thioadenosine phosphorylase (307 aa).

Phosphate-binding positions include Thr20, 62–63 (RH), and 95–96 (SA). Residue Met197 participates in substrate binding. Ser198 is a phosphate binding site. 221–223 (DYD) is a substrate binding site.

Belongs to the PNP/MTAP phosphorylase family. MTAP subfamily. As to quaternary structure, homotrimer.

It localises to the cytoplasm. It is found in the nucleus. The enzyme catalyses S-methyl-5'-thioadenosine + phosphate = 5-(methylsulfanyl)-alpha-D-ribose 1-phosphate + adenine. Its pathway is amino-acid biosynthesis; L-methionine biosynthesis via salvage pathway; S-methyl-5-thio-alpha-D-ribose 1-phosphate from S-methyl-5'-thioadenosine (phosphorylase route): step 1/1. Catalyzes the reversible phosphorylation of S-methyl-5'-thioadenosine (MTA) to adenine and 5-methylthioribose-1-phosphate. Involved in the breakdown of MTA, a major by-product of polyamine biosynthesis. Responsible for the first step in the methionine salvage pathway after MTA has been generated from S-adenosylmethionine. Has broad substrate specificity with 6-aminopurine nucleosides as preferred substrates. The polypeptide is S-methyl-5'-thioadenosine phosphorylase (Fusarium vanettenii (strain ATCC MYA-4622 / CBS 123669 / FGSC 9596 / NRRL 45880 / 77-13-4) (Fusarium solani subsp. pisi)).